The sequence spans 280 residues: Lysosome-associated membrane glycoprotein 5 (280 aa).

The signal sequence occupies residues 1 to 29; that stretch reads MDLRRRALLGVDGLRVLLMLFHTVTRIMA. Residues 30–235 lie on the Extracellular side of the membrane; that stretch reads EQEVENLSGL…PVDEREQLEE (206 aa). Residues Asn-35 and Asn-53 are each glycosylated (N-linked (GlcNAc...) asparagine). A helical transmembrane segment spans residues 236-256; that stretch reads TLPLILGLILGLVIVVTLVIY. Over 257–280 the chain is Cytoplasmic; it reads HIHHKMTANQVQIPRDRSQYKHMG.

This sequence belongs to the LAMP family. Post-translationally, glycosylated.

The protein resides in the cytoplasmic vesicle membrane. Its subcellular location is the cell membrane. It localises to the cell projection. The protein localises to the dendrite. It is found in the cytoplasmic vesicle. The protein resides in the secretory vesicle. Its subcellular location is the synaptic vesicle membrane. It localises to the growth cone membrane. The protein localises to the early endosome membrane. It is found in the recycling endosome. The protein resides in the endoplasmic reticulum-Golgi intermediate compartment membrane. Its subcellular location is the endosome membrane. Functionally, plays a role in short-term synaptic plasticity in a subset of GABAergic neurons in the brain. The protein is Lysosome-associated membrane glycoprotein 5 (LAMP5) of Bos taurus (Bovine).